The chain runs to 269 residues: Formamidopyrimidine-DNA glycosylase (269 aa).

Pro2 serves as the catalytic Schiff-base intermediate with DNA. Glu3 functions as the Proton donor in the catalytic mechanism. Catalysis depends on Lys57, which acts as the Proton donor; for beta-elimination activity. 3 residues coordinate DNA: His90, Arg109, and Lys150. The FPG-type zinc finger occupies 235–269 (QVYGRKGEPCRVCGTPIVATKHAQRATFYCRHCQK). Residue Arg259 is the Proton donor; for delta-elimination activity of the active site.

It belongs to the FPG family. As to quaternary structure, monomer. Zn(2+) is required as a cofactor.

The enzyme catalyses Hydrolysis of DNA containing ring-opened 7-methylguanine residues, releasing 2,6-diamino-4-hydroxy-5-(N-methyl)formamidopyrimidine.. The catalysed reaction is 2'-deoxyribonucleotide-(2'-deoxyribose 5'-phosphate)-2'-deoxyribonucleotide-DNA = a 3'-end 2'-deoxyribonucleotide-(2,3-dehydro-2,3-deoxyribose 5'-phosphate)-DNA + a 5'-end 5'-phospho-2'-deoxyribonucleoside-DNA + H(+). Involved in base excision repair of DNA damaged by oxidation or by mutagenic agents. Acts as a DNA glycosylase that recognizes and removes damaged bases. Has a preference for oxidized purines, such as 7,8-dihydro-8-oxoguanine (8-oxoG). Has AP (apurinic/apyrimidinic) lyase activity and introduces nicks in the DNA strand. Cleaves the DNA backbone by beta-delta elimination to generate a single-strand break at the site of the removed base with both 3'- and 5'-phosphates. The chain is Formamidopyrimidine-DNA glycosylase from Salmonella agona (strain SL483).